Here is a 112-residue protein sequence, read N- to C-terminus: ATP synthase subunit c (112 aa).

Transmembrane regions (helical) follow at residues 36 to 56 (FSVL…AIGM) and 81 to 101 (MFIA…IALI).

It belongs to the ATPase C chain family. In terms of assembly, F-type ATPases have 2 components, F(1) - the catalytic core - and F(0) - the membrane proton channel. F(1) has five subunits: alpha(3), beta(3), gamma(1), delta(1), epsilon(1). F(0) has three main subunits: a(1), b(2) and c(10-14). The alpha and beta chains form an alternating ring which encloses part of the gamma chain. F(1) is attached to F(0) by a central stalk formed by the gamma and epsilon chains, while a peripheral stalk is formed by the delta and b chains.

It is found in the cell inner membrane. Its function is as follows. F(1)F(0) ATP synthase produces ATP from ADP in the presence of a proton or sodium gradient. F-type ATPases consist of two structural domains, F(1) containing the extramembraneous catalytic core and F(0) containing the membrane proton channel, linked together by a central stalk and a peripheral stalk. During catalysis, ATP synthesis in the catalytic domain of F(1) is coupled via a rotary mechanism of the central stalk subunits to proton translocation. This chain is ATP synthase subunit c, found in Campylobacter jejuni subsp. jejuni serotype O:2 (strain ATCC 700819 / NCTC 11168).